Here is a 124-residue protein sequence, read N- to C-terminus: Ribonuclease P protein component (124 aa).

It belongs to the RnpA family. In terms of assembly, consists of a catalytic RNA component (M1 or rnpB) and a protein subunit.

It carries out the reaction Endonucleolytic cleavage of RNA, removing 5'-extranucleotides from tRNA precursor.. Functionally, RNaseP catalyzes the removal of the 5'-leader sequence from pre-tRNA to produce the mature 5'-terminus. It can also cleave other RNA substrates such as 4.5S RNA. The protein component plays an auxiliary but essential role in vivo by binding to the 5'-leader sequence and broadening the substrate specificity of the ribozyme. The sequence is that of Ribonuclease P protein component from Mycolicibacterium gilvum (strain PYR-GCK) (Mycobacterium gilvum (strain PYR-GCK)).